The chain runs to 292 residues: ATP synthase gamma chain (292 aa).

This sequence belongs to the ATPase gamma chain family. In terms of assembly, F-type ATPases have 2 components, CF(1) - the catalytic core - and CF(0) - the membrane proton channel. CF(1) has five subunits: alpha(3), beta(3), gamma(1), delta(1), epsilon(1). CF(0) has three main subunits: a, b and c.

The protein localises to the cell inner membrane. Functionally, produces ATP from ADP in the presence of a proton gradient across the membrane. The gamma chain is believed to be important in regulating ATPase activity and the flow of protons through the CF(0) complex. This Syntrophobacter fumaroxidans (strain DSM 10017 / MPOB) protein is ATP synthase gamma chain.